Here is a 321-residue protein sequence, read N- to C-terminus: uncharacterized protein (321 aa).

The segment at 157 to 220 is disordered; the sequence is TLEQPIEEDF…EGAEEDSHEH (64 aa). A compositionally biased stretch (acidic residues) spans 161–214; it reads PIEEDFDEQDENDQNERDEDDAEEQEEDEVEEEEEEQQEEEEGENDEELTEGAE. A coiled-coil region spans residues 167–212; the sequence is DEQDENDQNERDEDDAEEQEEDEVEEEEEEQQEEEEGENDEELTEG.

This is an uncharacterized protein from Dictyostelium discoideum (Social amoeba).